The sequence spans 382 residues: D-galactonate dehydratase (382 aa).

Asp-183 is a Mg(2+) binding site. His-185 functions as the Proton donor in the catalytic mechanism. Mg(2+)-binding residues include Glu-209 and Glu-235. The Proton acceptor role is filled by His-285.

It belongs to the mandelate racemase/muconate lactonizing enzyme family. GalD subfamily. The cofactor is Mg(2+).

The enzyme catalyses D-galactonate = 2-dehydro-3-deoxy-D-galactonate + H2O. It participates in carbohydrate acid metabolism; D-galactonate degradation; D-glyceraldehyde 3-phosphate and pyruvate from D-galactonate: step 1/3. Catalyzes the dehydration of D-galactonate to 2-keto-3-deoxy-D-galactonate. The sequence is that of D-galactonate dehydratase from Cronobacter sakazakii (strain ATCC BAA-894) (Enterobacter sakazakii).